A 481-amino-acid chain; its full sequence is Aspartyl/glutamyl-tRNA(Asn/Gln) amidotransferase subunit B (481 aa).

The protein belongs to the GatB/GatE family. GatB subfamily. As to quaternary structure, heterotrimer of A, B and C subunits.

The catalysed reaction is L-glutamyl-tRNA(Gln) + L-glutamine + ATP + H2O = L-glutaminyl-tRNA(Gln) + L-glutamate + ADP + phosphate + H(+). The enzyme catalyses L-aspartyl-tRNA(Asn) + L-glutamine + ATP + H2O = L-asparaginyl-tRNA(Asn) + L-glutamate + ADP + phosphate + 2 H(+). Allows the formation of correctly charged Asn-tRNA(Asn) or Gln-tRNA(Gln) through the transamidation of misacylated Asp-tRNA(Asn) or Glu-tRNA(Gln) in organisms which lack either or both of asparaginyl-tRNA or glutaminyl-tRNA synthetases. The reaction takes place in the presence of glutamine and ATP through an activated phospho-Asp-tRNA(Asn) or phospho-Glu-tRNA(Gln). In Pseudomonas fluorescens (strain SBW25), this protein is Aspartyl/glutamyl-tRNA(Asn/Gln) amidotransferase subunit B.